The following is a 180-amino-acid chain: ATP synthase subunit delta (180 aa).

This sequence belongs to the ATPase delta chain family. F-type ATPases have 2 components, F(1) - the catalytic core - and F(0) - the membrane proton channel. F(1) has five subunits: alpha(3), beta(3), gamma(1), delta(1), epsilon(1). F(0) has three main subunits: a(1), b(2) and c(10-14). The alpha and beta chains form an alternating ring which encloses part of the gamma chain. F(1) is attached to F(0) by a central stalk formed by the gamma and epsilon chains, while a peripheral stalk is formed by the delta and b chains.

The protein resides in the cell inner membrane. Functionally, f(1)F(0) ATP synthase produces ATP from ADP in the presence of a proton or sodium gradient. F-type ATPases consist of two structural domains, F(1) containing the extramembraneous catalytic core and F(0) containing the membrane proton channel, linked together by a central stalk and a peripheral stalk. During catalysis, ATP synthesis in the catalytic domain of F(1) is coupled via a rotary mechanism of the central stalk subunits to proton translocation. This protein is part of the stalk that links CF(0) to CF(1). It either transmits conformational changes from CF(0) to CF(1) or is implicated in proton conduction. The protein is ATP synthase subunit delta of Anaplasma phagocytophilum (strain HZ).